We begin with the raw amino-acid sequence, 699 residues long: MCDQQEIQCCGPIPQCCVKGSSFGPSQFPYANNQVLVEAPCEMQFLECAAPCPIQVSQTPCQSSTTEVKGQAPCKTTNVKCQTKTTQVKCQPKTTEIKCQAPCQAQVSCVQCQAPCQSQVSYVQVPQPPQTYYVECAPVYYTETRFVEYPVSNYVPVPAPQPGYTYVECPSLGQGQGQGSFSTRYQYQGSYGSCTSQSQSRGSYSSCGPQHQSQASYSYCEPQFQSRPSYTNCGTQRQSQASFGSCTSQLQSRASYSNCSSQRRSGTSFSTCAPQCQGQGTYGSFTAQRKSQSASRCLPSRRLQPSYRSCSPPRHSEPCYSSCLPSRCSSGSYNYCTPPRRSEPIYGSHCSPRGRPSGCSQRCGPKCRIEISSPCCPRQVPPQRCPVQIPPIRGRSRSCPRQPSWGVSCPDLRPCAEPHAFPRPCRPQRLDRSPESSWRRCPVPAPRPYPRPEPCPSPEPRPCPRPRPRPEPCPSPEPRPRPRPDPCPSPELRPRPRPEPCPSPEPRPRPRPDPCPSPEPRPRPCPEPCPSPEPRPCPPLRRFSEPCLYPEPCSVSKPVPCPVPCPAPHPRPVHCETPGRRPQPSPRSQPCPHPEPMPRPVPCSSPVPCGDPIHCPSPCSGHNPVPYSQELGCHESNPCRLDTEGPSSYSFSQGQESNGCCVSGGVFSGSRGLSGCGDQGNTYRGMNCGACGGTQGAYF.

Ser-436 carries the post-translational modification Phosphoserine. 2 stretches are compositionally biased toward pro residues: residues 448-477 (PYPR…PSPE) and 513-533 (DPCP…PSPE). Residues 448-533 (PYPRPEPCPS…PCPEPCPSPE (86 aa)) form a disordered region.

Expressed in the stratified squamous epithelial layers of the skin, esophagus and tongue.

The protein localises to the cytoplasm. The sequence is that of Keratinocyte proline-rich protein (Kprp) from Rattus norvegicus (Rat).